Reading from the N-terminus, the 470-residue chain is Nitric oxide synthase, inducible (470 aa).

Residues Trp-2, Tyr-3, and Glu-7 each contribute to the L-arginine site. Arg-11, Trp-93, and Phe-106 together coordinate (6R)-L-erythro-5,6,7,8-tetrahydrobiopterin. Tyr-121 is a heme b binding site. Residues 145–165 (FKAVARAALFSSTLMSRVLAN) form a calmodulin-binding region. The Flavodoxin-like domain maps to 169–307 (CTVLYATETG…AFSAWALTAL (139 aa)). Positions 175, 176, 177, 179, 180, 221, 222, 258, 265, 291, and 295 each coordinate FMN. An NADP(+)-binding site is contributed by Arg-380. His-403 lines the FAD pocket. Residue Thr-440 coordinates NADP(+).

It belongs to the NOS family. Homodimer. Heme b serves as cofactor. It depends on FAD as a cofactor. FMN is required as a cofactor. Requires (6R)-L-erythro-5,6,7,8-tetrahydrobiopterin as cofactor.

It is found in the cytoplasm. Its subcellular location is the cytosol. The catalysed reaction is 2 L-arginine + 3 NADPH + 4 O2 + H(+) = 2 L-citrulline + 2 nitric oxide + 3 NADP(+) + 4 H2O. Its activity is regulated as follows. Not stimulated by calcium/calmodulin. Functionally, produces nitric oxide (NO) which is a messenger molecule with diverse functions throughout the body. In macrophages, NO mediates tumoricidal and bactericidal actions. Also has nitrosylase activity and mediates cysteine S-nitrosylation of cytoplasmic target proteins such COX2. The sequence is that of Nitric oxide synthase, inducible (nos2) from Oncorhynchus mykiss (Rainbow trout).